Here is a 380-residue protein sequence, read N- to C-terminus: MRTRRQTYPPIAESLTARSIVQALPASATISGNGGPKKKKNCVNRGLWDKQIPTDLLQEILSRLGLKANIHASLVCKTWLKEAVSVRKFQSRPWLFYPQSQRGGPKEGDYVLFNPSRSQTHHLKFPELTGYRNKLACAKDGWLLVVKDNPDVVFFLNPFTGERICLPQVPQNSTRDCLTFSAAPTSTSCCVISFTPQSFLYAVVKVDTWRPGESVWTTHHFDQKRYGEVINRCIFSNGMFYCLSTSGRLSVFDPSRETWNVLPVKPCRAFRRKIMLVRQVFMTEHEGDIFVVTTRRVNNRKLLAFKLNLQGNVWEEMKVPNGLTVFSSDATSLTRAGLPEEERNILYSSDIDDFVKSSHPTFYYYDCSAWLQPPHDNFNF.

Residues 47–94 (LWDKQIPTDLLQEILSRLGLKANIHASLVCKTWLKEAVSVRKFQSRPW) enclose the F-box domain. 2 Kelch repeats span residues 190-233 (CVIS…INRC) and 234-279 (IFSN…LVRQ).

This is F-box/kelch-repeat protein At3g18720 from Arabidopsis thaliana (Mouse-ear cress).